The sequence spans 113 residues: Hemerythrin (113 aa).

Fe cation is bound by residues H25, H54, E58, H73, H77, H101, and D106.

The protein belongs to the hemerythrin family. In terms of assembly, homotrimer.

Functionally, hemerythrin is a respiratory protein in blood cells of certain marine worms. The oxygen-binding site in each chain contains two iron atoms. This chain is Hemerythrin, found in Siphonosoma cumanense (Sipunculan worm).